A 1483-amino-acid polypeptide reads, in one-letter code: Protein ORF C (1483 aa).

Disordered regions lie at residues 135–268 (LNDR…GRPP), 306–334 (VPYQ…LRPV), 383–506 (RRRA…FKRH), 518–653 (SIDD…DRNR), 680–911 (RQRR…TSVS), 949–976 (SSDD…RGGS), 1013–1061 (ALQQ…TDLI), and 1089–1299 (FSVA…QPSD). The segment covering 141–153 (AAGSAQRGSAGSR) has biased composition (low complexity). Polar residues predominate over residues 157–170 (DNLTPTAADTTGAQ). 2 stretches are compositionally biased toward low complexity: residues 190–206 (ASNV…RRQQ) and 220–251 (ARQQ…TTAT). Polar residues predominate over residues 252-264 (RQVFEQQGPSTIQ). Low complexity-rich tracts occupy residues 424 to 449 (SGQS…TTGT), 474 to 483 (SNEPSRQSQS), and 529 to 541 (TMTQ…STTR). Polar residues predominate over residues 596–607 (GSVTTTQPSGQL). A compositionally biased stretch (basic and acidic residues) spans 609 to 621 (SDDRGRPAPERRQ). The span at 622–640 (QPTSRQTVAQTNIIPNTSG) shows a compositional bias: polar residues. Residues 680–689 (RQRRETEAEH) show a composition bias toward basic and acidic residues. The segment covering 699–710 (TGVTPQRSNNPF) has biased composition (polar residues). Over residues 740-749 (SLREYRRRDP) the composition is skewed to basic and acidic residues. Residues 754–774 (GRSYTDGSTTSDGDSSDNSWS) are compositionally biased toward low complexity. A compositionally biased stretch (polar residues) spans 841–876 (NLKSPSPRTKLTRSSSLKSPGTTTRDTQQTSHPLTR). A compositionally biased stretch (low complexity) spans 894-909 (DSGGSSDGNTGSSQTS). Polar residues-rich tracts occupy residues 1096 to 1109 (GSTS…SSIP) and 1116 to 1125 (GPSTMTSQSV). Residues 1148 to 1158 (SQSQPSSEQPA) are compositionally biased toward low complexity. Positions 1188–1202 (QPQSTVTNTQTQDVL) are enriched in polar residues. Composition is skewed to low complexity over residues 1204-1226 (SQGS…KTGS) and 1233-1251 (KSAL…SGKS). The segment covering 1258 to 1276 (AASSTDPTTKPTRKVSINA) has biased composition (polar residues). The segment covering 1284 to 1299 (KSSTKQSTKTSTQPSD) has biased composition (low complexity). The stretch at 1408–1438 (AEQIRNLEVDELKILRQQVRERIANERQQQD) forms a coiled coil. Residues 1454–1483 (DMLVSEESAAPTPLPMDTGRFTPKSDVDMS) form a disordered region.

The protein is Protein ORF C of Elephantid herpesvirus 1 (isolate Asian elephant/Berlin/Kiba/1998) (EIHV-1).